A 336-amino-acid chain; its full sequence is Carbamoyl dehydratase HypE (336 aa).

Cys-336 carries the post-translational modification S-carbamoylcysteine; by HypF; alternate. Cys-336 carries the S-cyanocysteine; by autocatalysis; alternate modification.

The protein belongs to the HypE family. As to quaternary structure, homodimer. Forms a complex with HypF. Also forms a complex with HypC, or HybG, and HypD. Modified by HypF, which adds a carboxamido group to the thiolate of the C-terminal cysteine, yielding a protein-S-carboxamide. The carboxamido group is then dehydrated by HypE itself to yield a protein-thiocyanate.

The catalysed reaction is C-terminal S-carboxamide-L-cysteinyl-[HypE protein] + ATP = C-terminal S-cyanate-L-cysteinyl-[HypE protein] + ADP + phosphate + H(+). Its pathway is protein modification; [NiFe] hydrogenase maturation. Involved in the maturation of [NiFe] hydrogenases. Along with HypF, it catalyzes the synthesis of the CN ligands of the active site iron of [NiFe]-hydrogenases. HypE catalyzes the ATP-dependent dehydration of the carboxamido group attached to its C-terminal cysteine to a cyano group. The cyano group is then transferred from HypE to the HypC-HypD complex or the HybG-HypD complex. In Escherichia coli (strain K12), this protein is Carbamoyl dehydratase HypE.